Here is a 267-residue protein sequence, read N- to C-terminus: Ras-related protein Rab-36 (267 aa).

Positions 68, 69, 70, 71, 72, 83, 86, and 89 each coordinate GTP. Threonine 71 provides a ligand contact to Mg(2+). Positions 76–94 (RLCKNVFDHDYKATIGVDF) match the Switch 1 motif. Mg(2+) is bound by residues threonine 89 and aspartate 112. Residues 113–132 (TAGQEKFKCIASAYYRGAQV) carry the Switch 2 motif. GTP contacts are provided by glycine 115, lysine 172, aspartate 174, serine 203, alanine 204, and lysine 205. Residues cysteine 266 and cysteine 267 are each lipidated (S-geranylgeranyl cysteine).

This sequence belongs to the small GTPase superfamily. Rab family. Mg(2+) is required as a cofactor.

It localises to the golgi apparatus membrane. It catalyses the reaction GTP + H2O = GDP + phosphate + H(+). With respect to regulation, regulated by guanine nucleotide exchange factors (GEFs) which promote the exchange of bound GDP for free GTP. Regulated by GTPase activating proteins (GAPs) which increase the GTP hydrolysis activity. Inhibited by GDP dissociation inhibitors (GDIs). Functionally, the small GTPases Rab are key regulators of intracellular membrane trafficking, from the formation of transport vesicles to their fusion with membranes. Rabs cycle between an inactive GDP-bound form and an active GTP-bound form that is able to recruit to membranes different sets of downstream effectors directly responsible for vesicle formation, movement, tethering and fusion. This chain is Ras-related protein Rab-36, found in Mus musculus (Mouse).